The sequence spans 430 residues: Tol-Pal system protein TolB (430 aa).

Residues 1–21 form the signal peptide; sequence MKQALRVAFGFLILWASVLHA.

This sequence belongs to the TolB family. In terms of assembly, the Tol-Pal system is composed of five core proteins: the inner membrane proteins TolA, TolQ and TolR, the periplasmic protein TolB and the outer membrane protein Pal. They form a network linking the inner and outer membranes and the peptidoglycan layer.

The protein localises to the periplasm. Its function is as follows. Part of the Tol-Pal system, which plays a role in outer membrane invagination during cell division and is important for maintaining outer membrane integrity. TolB occupies a key intermediary position in the Tol-Pal system because it communicates directly with both membrane-embedded components, Pal in the outer membrane and TolA in the inner membrane. The polypeptide is Tol-Pal system protein TolB (Escherichia coli O139:H28 (strain E24377A / ETEC)).